Here is a 463-residue protein sequence, read N- to C-terminus: Glutamate--tRNA ligase (463 aa).

The short motif at 10–20 (PSPTGHLHIGG) is the 'HIGH' region element. The 'KMSKS' region signature appears at 236 to 240 (KLSKR). K239 lines the ATP pocket.

The protein belongs to the class-I aminoacyl-tRNA synthetase family. Glutamate--tRNA ligase type 1 subfamily. In terms of assembly, monomer.

The protein resides in the cytoplasm. The enzyme catalyses tRNA(Glu) + L-glutamate + ATP = L-glutamyl-tRNA(Glu) + AMP + diphosphate. Its function is as follows. Catalyzes the attachment of glutamate to tRNA(Glu) in a two-step reaction: glutamate is first activated by ATP to form Glu-AMP and then transferred to the acceptor end of tRNA(Glu). The polypeptide is Glutamate--tRNA ligase (Nitratidesulfovibrio vulgaris (strain ATCC 29579 / DSM 644 / CCUG 34227 / NCIMB 8303 / VKM B-1760 / Hildenborough) (Desulfovibrio vulgaris)).